The following is a 420-amino-acid chain: Transcription factor dbaG (420 aa).

The protein resides in the nucleus. Transcription factor that coregulates the expression of the gene cluster that mediates the biosynthesis of the antibiotic 2,4- dihydroxy-3-methyl-6-(2-oxopropyl)benzaldehyde (DHMBA) and its derivatives. Specifically positively regulates the expression of the FAD-dependent oxidoreductase dbaF. In Emericella nidulans (strain FGSC A4 / ATCC 38163 / CBS 112.46 / NRRL 194 / M139) (Aspergillus nidulans), this protein is Transcription factor dbaG.